The sequence spans 434 residues: Protein maelstrom homolog (434 aa).

The segment at residues 4–73 is a DNA-binding region (HMG box); the sequence is RRASRNAYYF…AQGKDSGPSE (70 aa).

It belongs to the maelstrom family. In terms of assembly, interacts with SMARCB1, SIN3B and DDX4. Interacts with piRNA-associated proteins TDRD1, PIWIL1 and PIWIL2. Interacts with Tex19.1 and, probably, Tex19.2. Testis-specific. Present in spermatocytes and round and early elongating spermatids.

It is found in the cytoplasm. The protein localises to the nucleus. Functionally, plays a central role during spermatogenesis by repressing transposable elements and preventing their mobilization, which is essential for the germline integrity. Acts via the piRNA metabolic process, which mediates the repression of transposable elements during meiosis by forming complexes composed of piRNAs and Piwi proteins and governs the methylation and subsequent repression of transposons. Its association with piP-bodies suggests a participation in the secondary piRNAs metabolic process. Required for the localization of germ-cell factors to the meiotic nuage. The protein is Protein maelstrom homolog of Mus musculus (Mouse).